The sequence spans 174 residues: Gamma-crystallin F (174 aa).

Beta/gamma crystallin 'Greek key' domains follow at residues 2–40 (GKIT…RVDS) and 41–83 (GCWM…RLIP). A connecting peptide region spans residues 84 to 87 (HTGS). 2 Beta/gamma crystallin 'Greek key' domains span residues 88–128 (HRLR…NVLE) and 129–171 (GWWV…RRAV).

The protein belongs to the beta/gamma-crystallin family.

Its function is as follows. Crystallins are the dominant structural components of the vertebrate eye lens. The sequence is that of Gamma-crystallin F (CRYGF) from Bos taurus (Bovine).